A 53-amino-acid chain; its full sequence is MPQMAPISWLTLFFVFSITLVIFNIKNYFCFSYNSTETSQNLNIKQHKLNWKW.

A helical transmembrane segment spans residues 5–25 (APISWLTLFFVFSITLVIFNI).

The protein belongs to the ATPase protein 8 family. As to quaternary structure, F-type ATPases have 2 components, CF(1) - the catalytic core - and CF(0) - the membrane proton channel.

It is found in the mitochondrion membrane. Its function is as follows. Mitochondrial membrane ATP synthase (F(1)F(O) ATP synthase or Complex V) produces ATP from ADP in the presence of a proton gradient across the membrane which is generated by electron transport complexes of the respiratory chain. F-type ATPases consist of two structural domains, F(1) - containing the extramembraneous catalytic core and F(0) - containing the membrane proton channel, linked together by a central stalk and a peripheral stalk. During catalysis, ATP synthesis in the catalytic domain of F(1) is coupled via a rotary mechanism of the central stalk subunits to proton translocation. Part of the complex F(0) domain. Minor subunit located with subunit a in the membrane. In Aedes aegypti (Yellowfever mosquito), this protein is ATP synthase protein 8.